We begin with the raw amino-acid sequence, 192 residues long: Thymidylate kinase (192 aa).

7-14 is a binding site for ATP; that stretch reads GIDCVGKS.

Belongs to the thymidylate kinase family.

It catalyses the reaction dTMP + ATP = dTDP + ADP. Phosphorylation of dTMP to form dTDP in both de novo and salvage pathways of dTTP synthesis. The chain is Thymidylate kinase (tmk) from Campylobacter jejuni subsp. jejuni serotype O:2 (strain ATCC 700819 / NCTC 11168).